The following is a 2138-amino-acid chain: DNA polymerase epsilon catalytic subunit B (2138 aa).

Positions 1224-1231 (EKRKWKMT) match the Nuclear localization signal 1 motif. The Zn(2+) site is built by C2015, C2018, C2040, and C2045. Residues 2015-2045 (CSNCGAYRDLDFCRDSALLTEKEWSCADPQC) form a CysA-type zinc finger. Residues C2076, C2079, C2091, and C2093 each contribute to the [4Fe-4S] cluster site. Positions 2076–2093 (CNRCNQVKAAHLTEQCEC) match the CysB motif motif. The Nuclear localization signal 2 motif lies at 2107–2114 (HKRIEIFL).

The protein belongs to the DNA polymerase type-B family. In terms of assembly, heterotetramer. It depends on [4Fe-4S] cluster as a cofactor. In terms of tissue distribution, mostly expressed at low levels in inflorescence (floral meristem and flowers until anthesis), and, to a lower extent, in seeds.

It is found in the nucleus. The enzyme catalyses DNA(n) + a 2'-deoxyribonucleoside 5'-triphosphate = DNA(n+1) + diphosphate. DNA polymerase II, which participates in chromosomal DNA replication. Involved in the determination of cell fate during plant embryogenesis. Contributes to the flowering time repression. This chain is DNA polymerase epsilon catalytic subunit B (POL2B), found in Arabidopsis thaliana (Mouse-ear cress).